The primary structure comprises 557 residues: Aerobic glycerol-3-phosphate dehydrogenase (557 aa).

Residue 21–49 participates in FAD binding; it reads DLVIIGGGITGAGIALDASERGMKVALVE.

Belongs to the FAD-dependent glycerol-3-phosphate dehydrogenase family. Requires FAD as cofactor.

The protein localises to the cytoplasm. The enzyme catalyses a quinone + sn-glycerol 3-phosphate = dihydroxyacetone phosphate + a quinol. It functions in the pathway polyol metabolism; glycerol degradation via glycerol kinase pathway; glycerone phosphate from sn-glycerol 3-phosphate (aerobic route): step 1/1. The sequence is that of Aerobic glycerol-3-phosphate dehydrogenase (glpD) from Staphylococcus aureus (strain USA300).